Reading from the N-terminus, the 1069-residue chain is Regulator of nonsense transcripts 1 (1069 aa).

A disordered region spans residues 1–86 (MDDSDDEYSR…SEKSLTEEQH (86 aa)). Residues 28 to 50 (IGNTQDSQFAYEQFSVPTQSSQA) show a composition bias toward polar residues. Low complexity predominate over residues 51–65 (TDLLPGGTDGTTNDL). Basic and acidic residues predominate over residues 77 to 86 (SEKSLTEEQH). One can recognise a Upf1 CH-rich domain in the interval 87–244 (EQKLPEHACR…VRMEELWRDH (158 aa)). Zn(2+)-binding residues include C95, C98, C109, C112, C117, H127, H131, H137, C155, C158, C181, and C185. The segment at 95-127 (CRYCGISDPLCVAKCTVCRKWFCNSNDGTSGGH) is C3H. The interval 109 to 137 (CTVCRKWFCNSNDGTSGGHIVHHMVRSQH) is CC/SHH/C. The tract at residues 155-185 (CYRCGSKNVFNLGFIPGKKDQVVVIICRTPC) is C4. ATP contacts are provided by residues Q450, 467 to 474 (GPPGTGKT), Q639, Y676, and E807. The interval 966–1069 (ARNQKDRRRG…MDDLLFSQDC (104 aa)) is disordered. Low complexity predominate over residues 991-1013 (SQGMMSQQSQQYPPQGASSQSQY).

This sequence belongs to the DNA2/NAM7 helicase family. Post-translationally, phosphorylated probably by smg-1. Smg-3 and smg-4 are required for phosphorylation.

It localises to the cytoplasm. The catalysed reaction is ATP + H2O = ADP + phosphate + H(+). RNA-dependent helicase required for nonsense-mediated decay (NMD) of aberrant mRNAs containing premature stop codons and modulates the expression level of normal mRNAs. Is recruited to mRNAs upon translation termination and undergoes a cycle of phosphorylation and dephosphorylation; its phosphorylation appears to be a key step in NMD. The formation of an smg-2-3-4 surveillance complex is believed to activate NMD. This is Regulator of nonsense transcripts 1 (smg-2) from Caenorhabditis elegans.